The primary structure comprises 274 residues: 2,3,4,5-tetrahydropyridine-2,6-dicarboxylate N-succinyltransferase (274 aa).

Substrate contacts are provided by arginine 103 and aspartate 140.

Belongs to the transferase hexapeptide repeat family. Homotrimer.

It is found in the cytoplasm. The enzyme catalyses (S)-2,3,4,5-tetrahydrodipicolinate + succinyl-CoA + H2O = (S)-2-succinylamino-6-oxoheptanedioate + CoA. The protein operates within amino-acid biosynthesis; L-lysine biosynthesis via DAP pathway; LL-2,6-diaminopimelate from (S)-tetrahydrodipicolinate (succinylase route): step 1/3. This chain is 2,3,4,5-tetrahydropyridine-2,6-dicarboxylate N-succinyltransferase, found in Actinobacillus pleuropneumoniae serotype 5b (strain L20).